Reading from the N-terminus, the 407-residue chain is Phosphoglycerate kinase (407 aa).

Substrate-binding positions include 24–26, arginine 40, 63–66, arginine 121, and arginine 154; these read DFN and HLGR. Residues lysine 205, glutamate 337, and 363-366 each bind ATP; that span reads GGDS.

This sequence belongs to the phosphoglycerate kinase family. In terms of assembly, monomer.

It is found in the cytoplasm. It catalyses the reaction (2R)-3-phosphoglycerate + ATP = (2R)-3-phospho-glyceroyl phosphate + ADP. It participates in carbohydrate degradation; glycolysis; pyruvate from D-glyceraldehyde 3-phosphate: step 2/5. This Gloeobacter violaceus (strain ATCC 29082 / PCC 7421) protein is Phosphoglycerate kinase.